A 697-amino-acid polypeptide reads, in one-letter code: Putative ATP-dependent RNA helicase an3 (697 aa).

Positions 27–189 are disordered; it reads ESGVAGTKGR…PLAPNDRVEQ (163 aa). Composition is skewed to basic and acidic residues over residues 89–111, 135–144, and 151–170; these read GRSD…DKDA, RRTDDRRQDG, and RSDK…WSDD. Residues 221-249 carry the Q motif motif; it reads ESFHDVTMGEIIMGNIQLTRYTRPTPVQK. ATP contacts are provided by residues 241-248 and 265-272; these read YTRPTPVQ and AQTGSGKT. A Helicase ATP-binding domain is found at 252–444; sequence IPIIIEKRDL…RDFLDEYIFL (193 aa). Positions 388-391 match the DEAD box motif; it reads DEAD. The 162-residue stretch at 455-616 folds into the Helicase C-terminal domain; the sequence is NITQKVVWVE…EVPSWLENMA (162 aa). Residues 619–666 form a disordered region; it reads QHHKSSSRGRSKSRFSGGFGAKDYRQSSGAGSSFGSSRGGRSSGHGGS. Residues 622 to 631 are compositionally biased toward basic residues; the sequence is KSSSRGRSKS. Residues 645 to 654 are compositionally biased toward low complexity; it reads SSGAGSSFGS. Residues 655–666 show a composition bias toward gly residues; the sequence is SRGGRSSGHGGS.

This sequence belongs to the DEAD box helicase family. DDX3/DED1 subfamily.

Its subcellular location is the cell membrane. It is found in the nucleus. The protein resides in the cytoplasm. It localises to the stress granule. The protein localises to the inflammasome. Its subcellular location is the cell projection. It is found in the lamellipodium. It catalyses the reaction ATP + H2O = ADP + phosphate + H(+). Functionally, multifunctional ATP-dependent RNA helicase. The ATPase activity can be stimulated by various ribo-and deoxynucleic acids indicative for a relaxed substrate specificity. In vitro can unwind partially double-stranded DNA with a preference for 5'-single-stranded DNA overhangs. Involved in many cellular processes, which do not necessarily require its ATPase/helicase catalytic activities. Involved in the regulation of transcription and translation initiation. Involved in innate immunity. Involved in both stress and inflammatory responses. May negatively regulate extrinsic apoptotic signaling pathway via death domain receptors. May be involved in mitotic chromosome segregation. Required for canonical Wnt signaling involved in anteroposterior neural patterning. The chain is Putative ATP-dependent RNA helicase an3 (an3) from Xenopus laevis (African clawed frog).